We begin with the raw amino-acid sequence, 145 residues long: Small ribosomal subunit protein eS19 (145 aa).

Lysine 23 carries the N6-acetyllysine modification. Arginine 67 carries the post-translational modification Omega-N-methylarginine. Lysine 111 and lysine 115 each carry N6-acetyllysine. Lysine 143 carries the N6-succinyllysine modification.

It belongs to the eukaryotic ribosomal protein eS19 family. In terms of assembly, component of the small ribosomal subunit. Part of the small subunit (SSU) processome, composed of more than 70 proteins and the RNA chaperone small nucleolar RNA (snoRNA) U3. Interacts with RPS19BP1.

It localises to the cytoplasm. It is found in the nucleus. The protein localises to the nucleolus. Functionally, component of the small ribosomal subunit. The ribosome is a large ribonucleoprotein complex responsible for the synthesis of proteins in the cell. Required for pre-rRNA processing and maturation of 40S ribosomal subunits. Part of the small subunit (SSU) processome, first precursor of the small eukaryotic ribosomal subunit. During the assembly of the SSU processome in the nucleolus, many ribosome biogenesis factors, an RNA chaperone and ribosomal proteins associate with the nascent pre-rRNA and work in concert to generate RNA folding, modifications, rearrangements and cleavage as well as targeted degradation of pre-ribosomal RNA by the RNA exosome. This chain is Small ribosomal subunit protein eS19 (Rps19), found in Rattus norvegicus (Rat).